The primary structure comprises 162 residues: Probable chemoreceptor glutamine deamidase CheD (162 aa).

The protein belongs to the CheD family.

It catalyses the reaction L-glutaminyl-[protein] + H2O = L-glutamyl-[protein] + NH4(+). Its function is as follows. Probably deamidates glutamine residues to glutamate on methyl-accepting chemotaxis receptors (MCPs), playing an important role in chemotaxis. The protein is Probable chemoreceptor glutamine deamidase CheD of Clostridium novyi (strain NT).